A 274-amino-acid chain; its full sequence is MQELQPIIEEAFERRADITPRNATPQVKDAVMAVIDLLDMGQLRVAERTDGQNWTTNQWVKKAVLLSFRLEDNAFIKGGYTNYYDKVPSKFADFNSKDFREGGFRVVPPAAARKGSYIGKNVVLMPSYVNIGAYVDEGTMVDTWATVGSCAQIGKNVHLSGGVGIGGVLEPVQANPTIIGDNCFIGARSEVVEGVIVEDNCVISMGVYIGQSTKIYDRETGEIHYGRVPAGSVVVSGNLPSKDGSYSLYCAVIVKKVDAKTLSKVGINELLRGI.

Substrate is bound by residues arginine 105 and aspartate 142.

It belongs to the transferase hexapeptide repeat family. In terms of assembly, homotrimer.

It localises to the cytoplasm. It carries out the reaction (S)-2,3,4,5-tetrahydrodipicolinate + succinyl-CoA + H2O = (S)-2-succinylamino-6-oxoheptanedioate + CoA. It functions in the pathway amino-acid biosynthesis; L-lysine biosynthesis via DAP pathway; LL-2,6-diaminopimelate from (S)-tetrahydrodipicolinate (succinylase route): step 1/3. This Thiobacillus denitrificans (strain ATCC 25259 / T1) protein is 2,3,4,5-tetrahydropyridine-2,6-dicarboxylate N-succinyltransferase.